Here is a 447-residue protein sequence, read N- to C-terminus: Tubulin beta chain (447 aa).

Residues Gln-11, Glu-69, Ser-138, Gly-142, Thr-143, Gly-144, Asn-204, and Asn-226 each coordinate GTP. Position 69 (Glu-69) interacts with Mg(2+). The disordered stretch occupies residues 419–447 (VSEYQQYQDATADEEGEYEDEDQEAEDDM). Residues 429–447 (TADEEGEYEDEDQEAEDDM) are compositionally biased toward acidic residues.

Belongs to the tubulin family. As to quaternary structure, dimer of alpha and beta chains. A typical microtubule is a hollow water-filled tube with an outer diameter of 25 nm and an inner diameter of 15 nM. Alpha-beta heterodimers associate head-to-tail to form protofilaments running lengthwise along the microtubule wall with the beta-tubulin subunit facing the microtubule plus end conferring a structural polarity. Microtubules usually have 13 protofilaments but different protofilament numbers can be found in some organisms and specialized cells. Requires Mg(2+) as cofactor.

It is found in the cytoplasm. The protein localises to the cytoskeleton. In terms of biological role, tubulin is the major constituent of microtubules, a cylinder consisting of laterally associated linear protofilaments composed of alpha- and beta-tubulin heterodimers. Microtubules grow by the addition of GTP-tubulin dimers to the microtubule end, where a stabilizing cap forms. Below the cap, tubulin dimers are in GDP-bound state, owing to GTPase activity of alpha-tubulin. The sequence is that of Tubulin beta chain (TUBB) from Hordeum vulgare (Barley).